The chain runs to 541 residues: ATP synthase subunit alpha (541 aa).

169–176 (GDRQTGKT) provides a ligand contact to ATP. Positions 506–541 (NTLLNVEEGDTGEEENNEGHNKAEQDTEEKDTEEVV) are disordered. Acidic residues-rich tracts occupy residues 512–521 (EEGDTGEEEN) and 531–541 (DTEEKDTEEVV).

Belongs to the ATPase alpha/beta chains family. As to quaternary structure, F-type ATPases have 2 components, CF(1) - the catalytic core - and CF(0) - the membrane proton channel. CF(1) has five subunits: alpha(3), beta(3), gamma(1), delta(1), epsilon(1). CF(0) has three main subunits: a(1), b(2) and c(9-12). The alpha and beta chains form an alternating ring which encloses part of the gamma chain. CF(1) is attached to CF(0) by a central stalk formed by the gamma and epsilon chains, while a peripheral stalk is formed by the delta and b chains.

The protein resides in the cell inner membrane. The catalysed reaction is ATP + H2O + 4 H(+)(in) = ADP + phosphate + 5 H(+)(out). Its function is as follows. Produces ATP from ADP in the presence of a proton gradient across the membrane. The alpha chain is a regulatory subunit. The protein is ATP synthase subunit alpha of Halothermothrix orenii (strain H 168 / OCM 544 / DSM 9562).